Reading from the N-terminus, the 703-residue chain is MSARATRPRSRRGRHAPPGELDPVAESSEEVEAASGSSKPSFAPPPVSSGLEQLGPMEEVSGQGLGSRTDKKMDGGSGRELASAPEVPHKPAVEAHQAPEAALQYKETVPPGNGAPDVFQTLQHTLSSLEAAAAAWRHQPPSHSGPMEFEGTSEGGAGSLGKQEGAGSCQREAARLAERNAWLRLALSSREDELVRTQASLEAIRAEKETLQKEVQELQDSLLRLEPCPHLSHNQAGGSGSGSSSSEADREPWETQDSFSLAHPLLRRLRSHSSTQILGSLPNQPLSPEMHIMEAQMEQLRGSIEKLKCFNRLLSAVLQGYKGRCEGLSMQLGQREAEATALHLALQYSEHCEEAYRVLLALREADSGAGDEAPMSDLQAAEKEAWRLLAQEEAAMDAGAQQNPQPSPEGSSVDKPTPQEVAFQLRSYVQRLQERRSLMKILSEPGPTLAPMPTVPRAEAMVQAILGTQAGPALPRLEKTQIQQDLVAAREALADLMLRLQLVRREKRGLELREAALRALGPAHVLLLEQLRWERAELQAGGANSSGGHSSGGGSSGDEEEWYQGLPAVPGGTSGIDGGQVGRAWDPEKLAQELAASLTRTLDLQEQLQSLRRELEQVAQKGRARRSQSAELNRDLCKAHSALVLAFRGAHRKQEEQRRKLEQQMALMEAQQAEEVAVLEATARALGKPRPPLPPPQLGDTFL.

Residues 1 to 15 (MSARATRPRSRRGRH) are compositionally biased toward basic residues. 2 disordered regions span residues 1–113 (MSAR…PPGN) and 138–172 (HQPPSHSGPMEFEGTSEGGAGSLGKQEGAGSCQRE). A coiled-coil region spans residues 189 to 227 (SREDELVRTQASLEAIRAEKETLQKEVQELQDSLLRLEP). The segment at 228–256 (CPHLSHNQAGGSGSGSSSSEADREPWETQ) is disordered. Positions 289–309 (EMHIMEAQMEQLRGSIEKLKC) form a coiled coil. The disordered stretch occupies residues 396–416 (MDAGAQQNPQPSPEGSSVDKP). Residues 400 to 410 (AQQNPQPSPEG) show a composition bias toward polar residues. A coiled-coil region spans residues 476 to 513 (RLEKTQIQQDLVAAREALADLMLRLQLVRREKRGLELR). The disordered stretch occupies residues 540–583 (AGGANSSGGHSSGGGSSGDEEEWYQGLPAVPGGTSGIDGGQVGR). The span at 572-581 (GTSGIDGGQV) shows a compositional bias: gly residues. A coiled-coil region spans residues 596–681 (ASLTRTLDLQ…QAEEVAVLEA (86 aa)).

This sequence belongs to the MCC family. In terms of assembly, interacts via its C-terminus with the first PDZ domain of USH1C. As to expression, highest level of expression in heart, and moderate to low expression in skeletal muscle, kidney, liver, small intestine, placenta and lung.

The polypeptide is Harmonin-binding protein USHBP1 (Homo sapiens (Human)).